The chain runs to 294 residues: Cytosolic Fe-S cluster assembly factor CFD1 (294 aa).

Residue 25–32 coordinates ATP; that stretch reads GKGGVGKS. [4Fe-4S] cluster is bound by residues cysteine 214 and cysteine 217.

Belongs to the Mrp/NBP35 ATP-binding proteins family. NUBP2/CFD1 subfamily. Heterotetramer of 2 NBP35 and 2 CFD1 chains. The cofactor is [4Fe-4S] cluster.

It is found in the cytoplasm. In terms of biological role, component of the cytosolic iron-sulfur (Fe/S) protein assembly (CIA) machinery. Required for maturation of extramitochondrial Fe-S proteins. The NBP35-CFD1 heterotetramer forms a Fe-S scaffold complex, mediating the de novo assembly of an Fe-S cluster and its transfer to target apoproteins. Required for biogenesis and export of both ribosomal subunits, which may reflect a role in assembly of the Fe/S clusters in RLI1, a protein which performs rRNA processing and ribosome export. The protein is Cytosolic Fe-S cluster assembly factor CFD1 of Candida albicans (strain SC5314 / ATCC MYA-2876) (Yeast).